Reading from the N-terminus, the 179-residue chain is Putative undecaprenyl-phosphate N-acetylgalactosaminyl 1-phosphate transferase (179 aa).

A helical transmembrane segment spans residues 39–59; that stretch reads IWFALIGLAIALPMIAVFSIL.

This sequence belongs to the bacterial sugar transferase family.

It localises to the cell membrane. It carries out the reaction di-trans,octa-cis-undecaprenyl phosphate + UDP-N-acetyl-alpha-D-galactosamine = N-acetyl-alpha-D-galactosaminyl-di-trans,octa-cis-undecaprenyl diphosphate + UMP. The protein operates within cell wall biogenesis; teichuronic acid biosynthesis. In terms of biological role, might mediate the very first reaction in teichuronic synthesis, i.e. the formation of lipid-linked N-acetylglucosamine. The protein is Putative undecaprenyl-phosphate N-acetylgalactosaminyl 1-phosphate transferase (tuaA) of Bacillus subtilis (strain 168).